Consider the following 167-residue polypeptide: MPRYFDGDFLPPKGRFAICVARFNGFITEELAKGAVDTLVRHGVADADIDVYRCPGTYELPGLVRRVTETRQYVGVITLGAVIRGGTPHFDYVAGECAKGIGAVAFEAAAATPAKTVTFGVLTTDTVEQAIDRAGVKAGNKGAEATLACIEMVNLYAKMSATDGRKA.

Residues Phe23, 57 to 59 (TYE), and 81 to 83 (AVI) contribute to the 5-amino-6-(D-ribitylamino)uracil site. A (2S)-2-hydroxy-3-oxobutyl phosphate-binding site is contributed by 86 to 87 (GT). His89 acts as the Proton donor in catalysis. Phe119 is a binding site for 5-amino-6-(D-ribitylamino)uracil. (2S)-2-hydroxy-3-oxobutyl phosphate is bound at residue Arg133.

Belongs to the DMRL synthase family.

It catalyses the reaction (2S)-2-hydroxy-3-oxobutyl phosphate + 5-amino-6-(D-ribitylamino)uracil = 6,7-dimethyl-8-(1-D-ribityl)lumazine + phosphate + 2 H2O + H(+). It functions in the pathway cofactor biosynthesis; riboflavin biosynthesis; riboflavin from 2-hydroxy-3-oxobutyl phosphate and 5-amino-6-(D-ribitylamino)uracil: step 1/2. In terms of biological role, catalyzes the formation of 6,7-dimethyl-8-ribityllumazine by condensation of 5-amino-6-(D-ribitylamino)uracil with 3,4-dihydroxy-2-butanone 4-phosphate. This is the penultimate step in the biosynthesis of riboflavin. The polypeptide is 6,7-dimethyl-8-ribityllumazine synthase (Myxococcus xanthus (strain DK1622)).